We begin with the raw amino-acid sequence, 475 residues long: tRNA-2-methylthio-N(6)-dimethylallyladenosine synthase (475 aa).

Positions 2-119 (AKLHITTWGC…LPEMINKIRG (118 aa)) constitute an MTTase N-terminal domain. Cys11, Cys48, Cys82, Cys156, Cys160, and Cys163 together coordinate [4Fe-4S] cluster. The Radical SAM core domain occupies 142-374 (RAEGPTAFVS…QQRINHQAMQ (233 aa)). Positions 377–440 (RAMLGTEQRV…TNSLRGEVVR (64 aa)) constitute a TRAM domain.

The protein belongs to the methylthiotransferase family. MiaB subfamily. In terms of assembly, monomer. The cofactor is [4Fe-4S] cluster.

The protein resides in the cytoplasm. The catalysed reaction is N(6)-dimethylallyladenosine(37) in tRNA + (sulfur carrier)-SH + AH2 + 2 S-adenosyl-L-methionine = 2-methylsulfanyl-N(6)-dimethylallyladenosine(37) in tRNA + (sulfur carrier)-H + 5'-deoxyadenosine + L-methionine + A + S-adenosyl-L-homocysteine + 2 H(+). Catalyzes the methylthiolation of N6-(dimethylallyl)adenosine (i(6)A), leading to the formation of 2-methylthio-N6-(dimethylallyl)adenosine (ms(2)i(6)A) at position 37 in tRNAs that read codons beginning with uridine. This Actinobacillus pleuropneumoniae serotype 3 (strain JL03) protein is tRNA-2-methylthio-N(6)-dimethylallyladenosine synthase.